The primary structure comprises 361 residues: Peptide chain release factor 1 (361 aa).

An N5-methylglutamine modification is found at Gln237. Residues 286 to 306 are disordered; the sequence is AKQDQEQAAKRKSLVGSGDRS.

Belongs to the prokaryotic/mitochondrial release factor family. Post-translationally, methylated by PrmC. Methylation increases the termination efficiency of RF1.

Its subcellular location is the cytoplasm. Peptide chain release factor 1 directs the termination of translation in response to the peptide chain termination codons UAG and UAA. This chain is Peptide chain release factor 1, found in Coxiella burnetii (strain CbuK_Q154) (Coxiella burnetii (strain Q154)).